An 88-amino-acid polypeptide reads, in one-letter code: RNA-binding protein Hfq (88 aa).

Residues 10-70 (DRFLNILRTK…ISTILPAEYI (61 aa)) form the Sm domain.

It belongs to the Hfq family. As to quaternary structure, homohexamer.

Its function is as follows. RNA chaperone that binds small regulatory RNA (sRNAs) and mRNAs to facilitate mRNA translational regulation in response to envelope stress, environmental stress and changes in metabolite concentrations. Also binds with high specificity to tRNAs. This Fervidobacterium nodosum (strain ATCC 35602 / DSM 5306 / Rt17-B1) protein is RNA-binding protein Hfq.